The sequence spans 339 residues: Pyrimidine monooxygenase RutA (339 aa).

Residues 26 to 27, Asn92, Glu101, 117 to 118, and Ser167 each bind FMN; these read IK and RY.

It belongs to the NtaA/SnaA/DszA monooxygenase family. RutA subfamily.

The enzyme catalyses uracil + FMNH2 + NADH + O2 = (Z)-3-ureidoacrylate + FMN + NAD(+) + H2O + H(+). The catalysed reaction is thymine + FMNH2 + NADH + O2 = (Z)-2-methylureidoacrylate + FMN + NAD(+) + H2O + H(+). In terms of biological role, catalyzes the pyrimidine ring opening between N-3 and C-4 by an unusual flavin hydroperoxide-catalyzed mechanism, adding oxygen atoms in the process to yield ureidoacrylate peracid, that immediately reacts with FMN forming ureidoacrylate and FMN-N(5)-oxide. The FMN-N(5)-oxide reacts spontaneously with NADH to produce FMN. Requires the flavin reductase RutF to regenerate FMN in vivo. The protein is Pyrimidine monooxygenase RutA of Cronobacter sakazakii (strain ATCC BAA-894) (Enterobacter sakazakii).